The sequence spans 598 residues: Mitogen-activated protein kinase 19 (598 aa).

Positions 25-316 (YRILEVIGKG…AAEALADPYF (292 aa)) constitute a Protein kinase domain. ATP contacts are provided by residues 31–39 (IGKGSYGVV) and lysine 54. Catalysis depends on aspartate 151, which acts as the Proton acceptor. Threonine 187 carries the phosphothreonine modification. The TXY signature appears at 187-189 (TDY). Phosphotyrosine is present on tyrosine 189. Threonine 192 carries the phosphothreonine modification. The segment at 396–486 (GKSGPVIPPD…VTYENDRNLK (91 aa)) is disordered. Over residues 414-425 (SAVHSSAVNSNA) the composition is skewed to low complexity.

This sequence belongs to the protein kinase superfamily. CMGC Ser/Thr protein kinase family. MAP kinase subfamily. Post-translationally, dually phosphorylated on Thr-187 and Tyr-189, which activates the enzyme.

It catalyses the reaction L-seryl-[protein] + ATP = O-phospho-L-seryl-[protein] + ADP + H(+). The enzyme catalyses L-threonyl-[protein] + ATP = O-phospho-L-threonyl-[protein] + ADP + H(+). Activated by threonine and tyrosine phosphorylation. This Arabidopsis thaliana (Mouse-ear cress) protein is Mitogen-activated protein kinase 19 (MPK19).